A 318-amino-acid polypeptide reads, in one-letter code: Malate dehydrogenase (318 aa).

Residues 11-17 (GAGGNVG) and aspartate 37 contribute to the NAD(+) site. Substrate contacts are provided by arginine 86 and arginine 92. Residues asparagine 99 and 122-124 (VTN) each bind NAD(+). 2 residues coordinate substrate: asparagine 124 and arginine 155. The Proton acceptor role is filled by histidine 179.

This sequence belongs to the LDH/MDH superfamily. MDH type 3 family.

It carries out the reaction (S)-malate + NAD(+) = oxaloacetate + NADH + H(+). Functionally, catalyzes the reversible oxidation of malate to oxaloacetate. The protein is Malate dehydrogenase of Nitratiruptor sp. (strain SB155-2).